A 44-amino-acid chain; its full sequence is Mu-conotoxin-like Cal 12.1.1e (44 aa).

4 disulfides stabilise this stretch: C3–C16, C11–C28, C18–C33, and C27–C38. W17 bears the 6'-bromotryptophan mark. P23 bears the 4-hydroxyproline mark. 6'-bromotryptophan is present on residues W36 and W37. A 4-hydroxyproline modification is found at P39. At W43 the chain carries 6'-bromotryptophan.

As to expression, expressed by the venom duct.

Its subcellular location is the secreted. In terms of biological role, mu-conotoxins block voltage-gated sodium channels. This toxin reversibly blocks voltage-gated sodium channel in cephalopods, with no alteration in the voltage dependence of sodium conductance or on the kinetics of inactivation. In Californiconus californicus (California cone), this protein is Mu-conotoxin-like Cal 12.1.1e.